We begin with the raw amino-acid sequence, 620 residues long: Chaperone protein HscA homolog (620 aa).

The protein belongs to the heat shock protein 70 family.

Chaperone involved in the maturation of iron-sulfur cluster-containing proteins. Has a low intrinsic ATPase activity which is markedly stimulated by HscB. The sequence is that of Chaperone protein HscA homolog from Neisseria meningitidis serogroup B (strain ATCC BAA-335 / MC58).